The chain runs to 168 residues: MSEKALTLKQSGVRWLWLAILVFIADIGIKLVVMDNMGYGWANRIEVLPFFNLLYVHNYGAAFSFLSDQAGWQRWLFTGIAFVVTGLLTYWMSKLPAKEKWNNIAYALIIGGAVGNVFDRVVHGFVVDYLDFFWGSYHWPAFNLADTTICIGAAMIILDGFRKKDANK.

The next 4 helical transmembrane spans lie at 15-35 (WLWL…VVMD), 47-67 (VLPF…SFLS), 75-95 (WLFT…MSKL), and 107-127 (ALII…GFVV). Catalysis depends on residues Asp-128 and Asp-146. A helical membrane pass occupies residues 141-161 (AFNLADTTICIGAAMIILDGF).

The protein belongs to the peptidase A8 family.

The protein resides in the cell inner membrane. The catalysed reaction is Release of signal peptides from bacterial membrane prolipoproteins. Hydrolyzes -Xaa-Yaa-Zaa-|-(S,diacylglyceryl)Cys-, in which Xaa is hydrophobic (preferably Leu), and Yaa (Ala or Ser) and Zaa (Gly or Ala) have small, neutral side chains.. The protein operates within protein modification; lipoprotein biosynthesis (signal peptide cleavage). Its function is as follows. This protein specifically catalyzes the removal of signal peptides from prolipoproteins. The sequence is that of Lipoprotein signal peptidase from Vibrio campbellii (strain ATCC BAA-1116).